Consider the following 210-residue polypeptide: LexA repressor (210 aa).

Residues 30-50 constitute a DNA-binding region (H-T-H motif); that stretch reads RVEIAREIGFKSPNAAEEHLK. Residues S127 and K164 each act as for autocatalytic cleavage activity in the active site.

The protein belongs to the peptidase S24 family. As to quaternary structure, homodimer.

It catalyses the reaction Hydrolysis of Ala-|-Gly bond in repressor LexA.. In terms of biological role, represses a number of genes involved in the response to DNA damage (SOS response), including recA and lexA. In the presence of single-stranded DNA, RecA interacts with LexA causing an autocatalytic cleavage which disrupts the DNA-binding part of LexA, leading to derepression of the SOS regulon and eventually DNA repair. The chain is LexA repressor from Actinobacillus pleuropneumoniae serotype 7 (strain AP76).